A 195-amino-acid polypeptide reads, in one-letter code: Probable GTP-binding protein EngB (195 aa).

The region spanning 24–195 is the EngB-type G domain; that stretch reads ELPEIALAGR…EAWDAILEKL (172 aa). Residues 32–39, 59–63, 77–80, 144–147, and 176–178 contribute to the GTP site; these read GRSNVGKS, GKTQL, DVPG, TKAD, and FSS. Positions 39 and 61 each coordinate Mg(2+).

It belongs to the TRAFAC class TrmE-Era-EngA-EngB-Septin-like GTPase superfamily. EngB GTPase family. Mg(2+) is required as a cofactor.

Necessary for normal cell division and for the maintenance of normal septation. The sequence is that of Probable GTP-binding protein EngB from Streptococcus pneumoniae (strain P1031).